Consider the following 43-residue polypeptide: Protein PsbN (43 aa).

A helical membrane pass occupies residues 7 to 27 (VAIFISGLLVSFTGYALYTAF).

It belongs to the PsbN family.

It is found in the plastid. Its subcellular location is the chloroplast thylakoid membrane. Its function is as follows. May play a role in photosystem I and II biogenesis. The polypeptide is Protein PsbN (Daucus carota (Wild carrot)).